The following is a 186-amino-acid chain: MISSNDFRTGTTIEIDGQVWRVVEFLHVKPGKGSAFVRTKLKSVRNGNVVEKTFRAGESVQQAVLEKSNLQHTYVESGDYVFMDMTSFEETRLSSDQIGRGSKYLKEGMEVNVIFYKDKVLEVELPISITLKVTETDPGVKGDTASGGTKPAILETGAQVMVPLFISVGEMIKVDTRNDSYLGREN.

It belongs to the elongation factor P family.

The protein localises to the cytoplasm. It functions in the pathway protein biosynthesis; polypeptide chain elongation. Functionally, involved in peptide bond synthesis. Stimulates efficient translation and peptide-bond synthesis on native or reconstituted 70S ribosomes in vitro. Probably functions indirectly by altering the affinity of the ribosome for aminoacyl-tRNA, thus increasing their reactivity as acceptors for peptidyl transferase. This is Elongation factor P from Prochlorococcus marinus (strain MIT 9515).